Consider the following 177-residue polypeptide: uncharacterized protein (177 aa).

To B.subtilis YutG.

This is an uncharacterized protein from Bacillus subtilis (strain 168).